A 365-amino-acid chain; its full sequence is Probable dual-specificity RNA methyltransferase RlmN (365 aa).

Residue Glu-99 is the Proton acceptor of the active site. The Radical SAM core domain maps to 105–344; it reads QSYGLSVCVT…CVVRQEHGTD (240 aa). An intrachain disulfide couples Cys-112 to Cys-349. Cys-119, Cys-123, and Cys-126 together coordinate [4Fe-4S] cluster. S-adenosyl-L-methionine is bound by residues 171 to 172, Ser-203, 227 to 229, and Asn-305; these read GE and SLH. Residue Cys-349 is the S-methylcysteine intermediate of the active site.

The protein belongs to the radical SAM superfamily. RlmN family. [4Fe-4S] cluster serves as cofactor.

The protein resides in the cytoplasm. It carries out the reaction adenosine(2503) in 23S rRNA + 2 reduced [2Fe-2S]-[ferredoxin] + 2 S-adenosyl-L-methionine = 2-methyladenosine(2503) in 23S rRNA + 5'-deoxyadenosine + L-methionine + 2 oxidized [2Fe-2S]-[ferredoxin] + S-adenosyl-L-homocysteine. The catalysed reaction is adenosine(37) in tRNA + 2 reduced [2Fe-2S]-[ferredoxin] + 2 S-adenosyl-L-methionine = 2-methyladenosine(37) in tRNA + 5'-deoxyadenosine + L-methionine + 2 oxidized [2Fe-2S]-[ferredoxin] + S-adenosyl-L-homocysteine. Functionally, specifically methylates position 2 of adenine 2503 in 23S rRNA and position 2 of adenine 37 in tRNAs. This Lactococcus lactis subsp. cremoris (strain SK11) protein is Probable dual-specificity RNA methyltransferase RlmN.